The primary structure comprises 567 residues: Phosphoglucomutase-like protein 5 (567 aa).

The disordered stretch occupies residues 1–26 (MEGSPIPVLTVPTAPYEDQRPTGGGG). Thr120 carries the phosphothreonine modification. Residue Ser122 is modified to Phosphoserine.

It belongs to the phosphohexose mutase family. In terms of assembly, interacts with DMD/dystrophin; the interaction is direct. Interacts with UTRN/utrophin.

It localises to the cell junction. Its subcellular location is the adherens junction. The protein resides in the cytoplasm. The protein localises to the cytoskeleton. It is found in the cell membrane. It localises to the sarcolemma. Its function is as follows. Component of adherens-type cell-cell and cell-matrix junctions. Has no phosphoglucomutase activity in vitro. This is Phosphoglucomutase-like protein 5 from Rattus norvegicus (Rat).